We begin with the raw amino-acid sequence, 697 residues long: MAR-binding filament-like protein 1 (697 aa).

The N-terminal 41 residues, 1–41 (MATSCFPPFSASSSSLCSSQFTPLLSCPRNTQICRKKRPVM), are a transit peptide targeting the chloroplast. Residues 42–79 (ASMHSENQKESNVCNRRSILFVGFSVLPLLNLRARALE) constitute a thylakoid transit peptide. Topologically, residues 80 to 106 (GLSTDSQAQPQKEETEQTIQGSAGNPF) are lumenal, thylakoid. The disordered stretch occupies residues 81 to 100 (LSTDSQAQPQKEETEQTIQG). A helical transmembrane segment spans residues 107–127 (VSLLNGLGVVGSGVLGSLYAL). Residues 128–697 (ARNEKAVSDA…GEKEKVNVQQ (570 aa)) lie on the Stromal side of the membrane. The stretch at 203 to 671 (LQNEKKLAED…KGEILRLRSQ (469 aa)) forms a coiled coil. The interval 599 to 629 (TSRNSSLEDEREVHRQSVSEQKQISQEAQEN) is disordered. The segment covering 604–615 (SLEDEREVHRQS) has biased composition (basic and acidic residues). Over residues 616–627 (VSEQKQISQEAQ) the composition is skewed to polar residues.

In terms of assembly, interacts with MAF1. Interacts with PTST2; the interaction is essential for the initiation of starch granules biosynthesis in leaf chloroplasts, for the correct location of the process in the stromal spaces between the thylakoid membranes, and for the association of PTST2 with the thylakoid membranes. Phosphorylated in vitro by human casein kinase II. Post-translationally, predicted to be translocated into the thylakoid by the Tat system.

It is found in the plastid. Its subcellular location is the chloroplast. It localises to the chloroplast thylakoid membrane. The protein resides in the chloroplast stroma. The protein localises to the chloroplast nucleoid. It is found in the nucleus. Its subcellular location is the nucleus matrix. In terms of biological role, required for the initiation of starch granules biosynthesis in leaf chloroplasts. Anchored to the thylakoid membranes with its C-terminus facing into the stroma where it is essential for localizing PTST2 and SS4 to the stromal spaces between the thylakoid membranes in order to begin starch granule formation. Associated with leaf chloroplastic nucleoids in vivo. Binds to various chloroplastic double-stranded DNA fragments without particular sequence specificity in vitro. May function at the interface between nucleoids and thylakoids possibly by anchoring nucleoids to the thylakoid membrane system in mature chloroplasts. Binds nuclear DNA. Interacts with chromatin via matrix attachment regions (MARs). Likely to participate in nuclear architecture by connecting chromatin with the nuclear matrix and potentially with the nuclear envelope. This chain is MAR-binding filament-like protein 1, found in Solanum lycopersicum (Tomato).